We begin with the raw amino-acid sequence, 98 residues long: UPF0235 protein Pmen_4153 (98 aa).

This sequence belongs to the UPF0235 family.

In Ectopseudomonas mendocina (strain ymp) (Pseudomonas mendocina), this protein is UPF0235 protein Pmen_4153.